A 538-amino-acid polypeptide reads, in one-letter code: 2-isopropylmalate synthase (538 aa).

The Pyruvate carboxyltransferase domain maps to 6–277 (LIIFDTTLRD…DSTVPLSTID (272 aa)). Residues Asp-15, His-206, His-208, and Asn-242 each contribute to the Mn(2+) site. Positions 406 to 538 (RLEQVQVSCG…AHPDAAAQKL (133 aa)) are regulatory domain.

This sequence belongs to the alpha-IPM synthase/homocitrate synthase family. LeuA type 1 subfamily. As to quaternary structure, homodimer. Requires Mn(2+) as cofactor.

Its subcellular location is the cytoplasm. The catalysed reaction is 3-methyl-2-oxobutanoate + acetyl-CoA + H2O = (2S)-2-isopropylmalate + CoA + H(+). It functions in the pathway amino-acid biosynthesis; L-leucine biosynthesis; L-leucine from 3-methyl-2-oxobutanoate: step 1/4. In terms of biological role, catalyzes the condensation of the acetyl group of acetyl-CoA with 3-methyl-2-oxobutanoate (2-ketoisovalerate) to form 3-carboxy-3-hydroxy-4-methylpentanoate (2-isopropylmalate). This chain is 2-isopropylmalate synthase, found in Gloeobacter violaceus (strain ATCC 29082 / PCC 7421).